The chain runs to 220 residues: Imidazoleglycerol-phosphate dehydratase (220 aa).

It belongs to the imidazoleglycerol-phosphate dehydratase family.

It catalyses the reaction D-erythro-1-(imidazol-4-yl)glycerol 3-phosphate = 3-(imidazol-4-yl)-2-oxopropyl phosphate + H2O. The protein operates within amino-acid biosynthesis; L-histidine biosynthesis; L-histidine from 5-phospho-alpha-D-ribose 1-diphosphate: step 6/9. This chain is Imidazoleglycerol-phosphate dehydratase (HIS3), found in Eremothecium gossypii (strain ATCC 10895 / CBS 109.51 / FGSC 9923 / NRRL Y-1056) (Yeast).